A 92-amino-acid chain; its full sequence is Acylphosphatase (92 aa).

Positions 5–92 (CIAAYVYGVV…ADFQGFSIRY (88 aa)) constitute an Acylphosphatase-like domain. Catalysis depends on residues Arg-20 and Asn-38.

It belongs to the acylphosphatase family.

It catalyses the reaction an acyl phosphate + H2O = a carboxylate + phosphate + H(+). This chain is Acylphosphatase (acyP), found in Serratia proteamaculans (strain 568).